The primary structure comprises 255 residues: tRNA pseudouridine synthase A (255 aa).

D52 acts as the Nucleophile in catalysis. Y111 is a binding site for substrate.

Belongs to the tRNA pseudouridine synthase TruA family. In terms of assembly, homodimer.

It carries out the reaction uridine(38/39/40) in tRNA = pseudouridine(38/39/40) in tRNA. In terms of biological role, formation of pseudouridine at positions 38, 39 and 40 in the anticodon stem and loop of transfer RNAs. The polypeptide is tRNA pseudouridine synthase A (Cereibacter sphaeroides (strain ATCC 17029 / ATH 2.4.9) (Rhodobacter sphaeroides)).